The primary structure comprises 223 residues: Peptidyl-tRNA hydrolase (223 aa).

Y14 provides a ligand contact to tRNA. Residue H19 is the Proton acceptor of the active site. The tRNA site is built by Y64, N66, and N112. The disordered stretch occupies residues 183 to 223 (MNVRNTRPKPGKRQKGEGDGSTDPAPAAKEGKGPLPPTQKP).

It belongs to the PTH family. Monomer.

Its subcellular location is the cytoplasm. The enzyme catalyses an N-acyl-L-alpha-aminoacyl-tRNA + H2O = an N-acyl-L-amino acid + a tRNA + H(+). Hydrolyzes ribosome-free peptidyl-tRNAs (with 1 or more amino acids incorporated), which drop off the ribosome during protein synthesis, or as a result of ribosome stalling. Functionally, catalyzes the release of premature peptidyl moieties from peptidyl-tRNA molecules trapped in stalled 50S ribosomal subunits, and thus maintains levels of free tRNAs and 50S ribosomes. In Sorangium cellulosum (strain So ce56) (Polyangium cellulosum (strain So ce56)), this protein is Peptidyl-tRNA hydrolase.